Consider the following 500-residue polypeptide: MIRFKKTKLIASIAMALCLFSQPVISFSKDITDKNQSIDSGISSLSYNRNEVLASNGDKIESFVPKEGKKTGNKFIVVERQKRSLTTSPVDISIIDSVNDRTYPGALQLADKAFVENRPTILMVKRKPININIDLPGLKGENSIKVDDPTYGKVSGAIDELVSKWNEKYSSTHTLPARTQYSESMVYSKSQISSALNVNAKVLENSLGVDFNAVANNEKKVMILAYKQIFYTVSADLPKNPSDLFDDSVTFNDLKQKGVSNEAPPLMVSNVAYGRTIYVKLETTSSSKDVQAAFKALIKNTDIKNSQQYKDIYENSSFTAVVLGGDAQEHNKVVTKDFDEIRKVIKDNATFSTKNPAYPISYTSVFLKDNSVAAVHNKTDYIETTSTEYSKGKINLDHSGAYVAQFEVAWDEVSYDKEGNEVLTHKTWDGNYQDKTAHYSTVIPLEANARNIRIKARECTGLAWEWWRDVISEYDVPLTNNINVSIWGTTLYPGSSITYN.

Positions 1–28 are cleaved as a signal peptide; that stretch reads MIRFKKTKLIASIAMALCLFSQPVISFS. The next 4 membrane-spanning stretches (beta stranded) occupy residues 189 to 202, 209 to 218, 287 to 296, and 304 to 316; these read KSQISSALNVNAKV, VDFNAVANNE, SKDVQAAFKA, and KNSQQYKDIYENS. A Conserved undecapeptide motif is present at residues 458–468; sequence ECTGLAWEWWR. The Cholesterol binding motif lies at 490–491; the sequence is TL.

This sequence belongs to the cholesterol-dependent cytolysin family. As to quaternary structure, modeling based on cryo-EM shows a homooligomeric pore complex containing 38-44 subunits; when inserted in the host membrane.

It is found in the secreted. The protein localises to the host cell membrane. Its function is as follows. A cholesterol-dependent toxin that causes cytolysis by forming pores in cholesterol-containing host membranes. After binding to target membranes, the protein assembles into a pre-pore complex. A major conformational change leads to insertion in the host membrane and formation of an oligomeric pore complex. Cholesterol is required for binding to host cell membranes, membrane insertion and pore formation; cholesterol binding is mediated by a Thr-Leu pair in the C-terminus. Can be reversibly inactivated by oxidation. The polypeptide is Perfringolysin O (pfo) (Clostridium perfringens (strain 13 / Type A)).